The chain runs to 574 residues: Cytochrome P450 306a1 (574 aa).

Over residues 303–314 (EKEQLRQSKEAD) the composition is skewed to basic and acidic residues. The segment at 303–333 (EKEQLRQSKEADPSQEQSEADEDDEESDEED) is disordered. The span at 320–333 (SEADEDDEESDEED) shows a compositional bias: acidic residues. Heme is bound at residue Cys505.

The protein belongs to the cytochrome P450 family. Requires heme as cofactor. As to expression, first seen at the early (syncytial) blastoderm stage 4. During cellularization of the blastoderm (stage 5), stripes of expression appear and remain through to stage 10. Expression becomes undetectable during germ band retraction (stages 11-14). By stage 15, some expression resumes in the primordium of the ring gland, so that by stage 17 strong expression is seen, but only in the ring gland. This specific localization continues throughout the larval instars (at protein level). Expressed in the prothoracic gland cells of the larval ring gland (RG). Levels decline just after the molt to the third instar then increase later during the wandering stage. Low levels of expression are seen in the larval brain and fat body. In the adult, majority of expression is restricted to the ovaries, with low levels in the head and carcass of both sexes.

Its subcellular location is the endoplasmic reticulum membrane. It localises to the microsome membrane. It carries out the reaction 2,22,25-trideoxyecdysone + 2 reduced [adrenodoxin] + O2 + 2 H(+) = 2,22-dideoxyecdysone + 2 oxidized [adrenodoxin] + H2O. It participates in steroid biosynthesis; ecdysteroid biosynthesis. Functionally, involved in the metabolism of insect hormones; responsible for ecdysteroid C25-hydroxylase activity. May be involved in the breakdown of synthetic insecticides. This is Cytochrome P450 306a1 from Drosophila melanogaster (Fruit fly).